We begin with the raw amino-acid sequence, 223 residues long: Cytotoxic T-lymphocyte protein 4 (223 aa).

The first 35 residues, 1 to 35 (MAGFGFRRHGVQPDLASRTWPCTALFSLLFIPVFS), serve as a signal peptide directing secretion. The Extracellular portion of the chain corresponds to 36 to 161 (KGMHAAQPAV…IDPEPCPDSD (126 aa)). Positions 39–140 (HAAQPAVVLA…VELMYPPPYY (102 aa)) constitute an Ig-like V-type domain. Positions 46 to 50 (VLASS) are homodimerization. 2 disulfides stabilise this stretch: cysteine 58-cysteine 129 and cysteine 85-cysteine 103. Asparagine 113 is a glycosylation site (N-linked (GlcNAc...) asparagine). The tract at residues 134–139 (MYPPPY) is important for interaction with CD80 and CD86. N-linked (GlcNAc...) asparagine glycosylation is present at asparagine 145. The interval 150-155 (YVIDPE) is homodimerization. The helical transmembrane segment at 162–182 (FLLWILAAVSSGLFFYSFLIT) threads the bilayer. The Cytoplasmic portion of the chain corresponds to 183-223 (AVSLSKMLKKRSPLTTGVYVKMPPTGPECEKQFQPYFIPIN). Tyrosine 201 carries the post-translational modification Phosphotyrosine; by TXK and JAK2.

In terms of assembly, homodimer; disulfide-linked. Binds to CD80/B7-1 and CD86/B7.2. Interacts with ICOSLG. In terms of processing, N-glycosylation is important for dimerization. Phosphorylation at Tyr-201 prevents binding to the AP-2 adapter complex, blocks endocytosis, and leads to retention of CTLA4 on the cell surface.

The protein localises to the cell membrane. Its function is as follows. Inhibitory receptor acting as a major negative regulator of T-cell responses. The affinity of CTLA4 for its natural B7 family ligands, CD80 and CD86, is considerably stronger than the affinity of their cognate stimulatory coreceptor CD28. The protein is Cytotoxic T-lymphocyte protein 4 (CTLA4) of Canis lupus familiaris (Dog).